The following is a 252-amino-acid chain: Chitooligosaccharide deacetylase (252 aa).

2 residues coordinate Mg(2+): His61 and His125.

Belongs to the YdjC deacetylase family. ChbG subfamily. As to quaternary structure, homodimer. Mg(2+) is required as a cofactor.

It localises to the cytoplasm. The enzyme catalyses N,N'-diacetylchitobiose + H2O = N-acetyl-beta-D-glucosaminyl-(1-&gt;4)-D-glucosamine + acetate. It carries out the reaction diacetylchitobiose-6'-phosphate + H2O = N'-monoacetylchitobiose-6'-phosphate + acetate. It functions in the pathway glycan degradation; chitin degradation. In terms of biological role, involved in the degradation of chitin. ChbG is essential for growth on the acetylated chitooligosaccharides chitobiose and chitotriose but is dispensable for growth on cellobiose and chitosan dimer, the deacetylated form of chitobiose. Deacetylation of chitobiose-6-P and chitotriose-6-P is necessary for both the activation of the chb promoter by the regulatory protein ChbR and the hydrolysis of phosphorylated beta-glucosides by the phospho-beta-glucosidase ChbF. Catalyzes the removal of only one acetyl group from chitobiose-6-P to yield monoacetylchitobiose-6-P, the inducer of ChbR and the substrate of ChbF. The polypeptide is Chitooligosaccharide deacetylase (Salmonella dublin (strain CT_02021853)).